The primary structure comprises 351 residues: UDP-N-acetylenolpyruvoylglucosamine reductase (351 aa).

Residues 25–196 enclose the FAD-binding PCMH-type domain; the sequence is HIQAQARWLL…AAVEFRLPLL (172 aa). The active site involves R173. The Proton donor role is filled by S246. E343 is a catalytic residue.

It belongs to the MurB family. FAD serves as cofactor.

The protein localises to the cytoplasm. It carries out the reaction UDP-N-acetyl-alpha-D-muramate + NADP(+) = UDP-N-acetyl-3-O-(1-carboxyvinyl)-alpha-D-glucosamine + NADPH + H(+). It functions in the pathway cell wall biogenesis; peptidoglycan biosynthesis. Its function is as follows. Cell wall formation. The polypeptide is UDP-N-acetylenolpyruvoylglucosamine reductase (Xylella fastidiosa (strain 9a5c)).